The sequence spans 336 residues: tRNA (guanine(37)-N(1))-methyltransferase Trm5b (336 aa).

S-adenosyl-L-methionine contacts are provided by residues R186, 223–224, 251–252, and N265; these read DI and DV.

The protein belongs to the class I-like SAM-binding methyltransferase superfamily. TRM5/TYW2 family. In terms of assembly, monomer.

It is found in the cytoplasm. The catalysed reaction is guanosine(37) in tRNA + S-adenosyl-L-methionine = N(1)-methylguanosine(37) in tRNA + S-adenosyl-L-homocysteine + H(+). Specifically methylates the N1 position of guanosine-37 in various tRNAs. The polypeptide is tRNA (guanine(37)-N(1))-methyltransferase Trm5b (trm5b) (Methanocaldococcus jannaschii (strain ATCC 43067 / DSM 2661 / JAL-1 / JCM 10045 / NBRC 100440) (Methanococcus jannaschii)).